A 187-amino-acid polypeptide reads, in one-letter code: Elongation factor P (187 aa).

This sequence belongs to the elongation factor P family.

Its subcellular location is the cytoplasm. Its pathway is protein biosynthesis; polypeptide chain elongation. Involved in peptide bond synthesis. Stimulates efficient translation and peptide-bond synthesis on native or reconstituted 70S ribosomes in vitro. Probably functions indirectly by altering the affinity of the ribosome for aminoacyl-tRNA, thus increasing their reactivity as acceptors for peptidyl transferase. This chain is Elongation factor P, found in Chromobacterium violaceum (strain ATCC 12472 / DSM 30191 / JCM 1249 / CCUG 213 / NBRC 12614 / NCIMB 9131 / NCTC 9757 / MK).